We begin with the raw amino-acid sequence, 68 residues long: DNA-directed RNA polymerase subunit Rpo10 (68 aa).

The Zn(2+) site is built by Cys7, Cys10, Cys44, and Cys45.

The protein belongs to the archaeal Rpo10/eukaryotic RPB10 RNA polymerase subunit family. As to quaternary structure, part of the RNA polymerase complex. It depends on Zn(2+) as a cofactor.

The protein resides in the cytoplasm. The enzyme catalyses RNA(n) + a ribonucleoside 5'-triphosphate = RNA(n+1) + diphosphate. Functionally, DNA-dependent RNA polymerase (RNAP) catalyzes the transcription of DNA into RNA using the four ribonucleoside triphosphates as substrates. This is DNA-directed RNA polymerase subunit Rpo10 from Methanococcus maripaludis (strain C7 / ATCC BAA-1331).